A 425-amino-acid polypeptide reads, in one-letter code: Histone-binding protein RBBP4 (425 aa).

Alanine 2 carries the post-translational modification N-acetylalanine. WD repeat units lie at residues 32–125 (YDLV…NHEG), 126–175 (EVNR…RLRG), 176–223 (HQKE…KTIF), 225–270 (GHTA…HSVD), 271–314 (AHTA…HSFE), 315–371 (SHKD…FIHG), and 372–404 (GHTA…VWQM). Positions 361-406 (DGPPELLFIHGGHTAKISDFSWNPNEPWVICSVSEDNIMQVWQMAE) are interaction with HAT1.

Belongs to the WD repeat RBAP46/RBAP48/MSI1 family. As to quaternary structure, binds directly to histone H4, probably via helix 1 of the histone fold, a region that is not accessible when histone H4 is in chromatin. Interacts with CHAF1A, HDAC1, HDAC2, HDAC3 and HIRA. May also interact with HAT1.

The protein resides in the nucleus. It localises to the chromosome. Its subcellular location is the telomere. Its function is as follows. Core histone-binding subunit that may target chromatin assembly factors, chromatin remodeling factors and histone deacetylases to their histone substrates in a manner that is regulated by nucleosomal DNA. Component of several complexes which regulate chromatin metabolism. The chain is Histone-binding protein RBBP4 (RBBP4) from Gallus gallus (Chicken).